A 118-amino-acid polypeptide reads, in one-letter code: Ribosome-binding factor A (118 aa).

This sequence belongs to the RbfA family. As to quaternary structure, monomer. Binds 30S ribosomal subunits, but not 50S ribosomal subunits or 70S ribosomes.

It localises to the cytoplasm. In terms of biological role, one of several proteins that assist in the late maturation steps of the functional core of the 30S ribosomal subunit. Associates with free 30S ribosomal subunits (but not with 30S subunits that are part of 70S ribosomes or polysomes). Required for efficient processing of 16S rRNA. May interact with the 5'-terminal helix region of 16S rRNA. The polypeptide is Ribosome-binding factor A (Streptococcus pyogenes serotype M1).